We begin with the raw amino-acid sequence, 698 residues long: Elongation factor G (698 aa).

Residues 10 to 285 form the tr-type G domain; the sequence is ASTRNIGIMA…AVVDFLPNPL (276 aa). GTP-binding positions include 19 to 26, 83 to 87, and 137 to 140; these read AHIDAGKT, DTPGH, and NKMD.

This sequence belongs to the TRAFAC class translation factor GTPase superfamily. Classic translation factor GTPase family. EF-G/EF-2 subfamily.

It is found in the cytoplasm. In terms of biological role, catalyzes the GTP-dependent ribosomal translocation step during translation elongation. During this step, the ribosome changes from the pre-translocational (PRE) to the post-translocational (POST) state as the newly formed A-site-bound peptidyl-tRNA and P-site-bound deacylated tRNA move to the P and E sites, respectively. Catalyzes the coordinated movement of the two tRNA molecules, the mRNA and conformational changes in the ribosome. In Frankia alni (strain DSM 45986 / CECT 9034 / ACN14a), this protein is Elongation factor G.